The chain runs to 975 residues: Translation initiation factor IF-2 (975 aa).

Composition is skewed to basic and acidic residues over residues 48 to 63 (DHLR…DKRK) and 120 to 177 (AELK…EAAA). 2 disordered regions span residues 48 to 85 (DHLR…KART) and 98 to 390 (KRDD…PTEP). A compositionally biased stretch (low complexity) spans 178-211 (KRAAAAQAEAAQQAAAAREQAQRAQSEPAEQSAQ). A compositionally biased stretch (basic and acidic residues) spans 212 to 263 (DEARAAAERAAQREAAKKAEDAAREAADKARAEQEEIRKRREAAEAEARAIR). The segment covering 302–330 (KPAGEAAAARPAAKKPASGAPAPAAAPAG) has biased composition (low complexity). The segment covering 359-372 (SSGGVDRGWRGGPK) has biased composition (gly residues). Positions 475 to 644 (PRPPVVTVMG…LLQAEVLELK (170 aa)) constitute a tr-type G domain. Residues 484-491 (GHVDHGKT) are G1. Position 484–491 (484–491 (GHVDHGKT)) interacts with GTP. Positions 509-513 (GITQH) are G2. The segment at 530–533 (DTPG) is G3. Residues 530–534 (DTPGH) and 584–587 (NKID) contribute to the GTP site. Positions 584 to 587 (NKID) are G4. The interval 620–622 (SAK) is G5.

The protein belongs to the TRAFAC class translation factor GTPase superfamily. Classic translation factor GTPase family. IF-2 subfamily.

It is found in the cytoplasm. One of the essential components for the initiation of protein synthesis. Protects formylmethionyl-tRNA from spontaneous hydrolysis and promotes its binding to the 30S ribosomal subunits. Also involved in the hydrolysis of GTP during the formation of the 70S ribosomal complex. The protein is Translation initiation factor IF-2 of Burkholderia pseudomallei (strain 1106a).